Reading from the N-terminus, the 309-residue chain is Taste receptor type 2 member 114 (309 aa).

The Extracellular segment spans residues 1–7 (MLSTMEG). Residues 8 to 28 (VLLSVSTSEAVLGIVGNTFIA) traverse the membrane as a helical segment. The Cytoplasmic segment spans residues 29–43 (LVNCMDYNRNKKLSN). The chain crosses the membrane as a helical span at residues 44–64 (IGFILTGLAISRICLVLILIT). The Extracellular segment spans residues 65 to 87 (EAYIKIFYPQLLSPVNIIELISY). Residues 88-108 (LWIIICQLNVWFATSLSIFYF) form a helical membrane-spanning segment. Over 109–127 (LKIANFSHYIFVWLKRRID) the chain is Cytoplasmic. A helical membrane pass occupies residues 128 to 148 (LVFFFLIGCLLISWLFSFPVV). The Extracellular segment spans residues 149–182 (AKMVKDNKMLYINTSWQIHMKKSELIINYVFTNG). N161 is a glycosylation site (N-linked (GlcNAc...) asparagine). The helical transmembrane segment at 183–203 (GVFLFFMIMLIVCFLLIISLW) threads the bilayer. Residues 204–233 (RHRRQMESNKLGFRDLNTEVHVRTIKVLLS) lie on the Cytoplasmic side of the membrane. The helical transmembrane segment at 234–254 (FIILFILHFMGITINVICLLI) threads the bilayer. The Extracellular portion of the chain corresponds to 255–259 (PESNL). A helical transmembrane segment spans residues 260 to 280 (LFMFGLTTAFIYPGCHSLILI). Residues 281–309 (LANSRLKQCSVMILQLLKCCENGKELRDT) lie on the Cytoplasmic side of the membrane.

Belongs to the G-protein coupled receptor T2R family.

It is found in the membrane. In terms of biological role, putative taste receptor which may play a role in the perception of bitterness. The chain is Taste receptor type 2 member 114 from Mus musculus (Mouse).